The primary structure comprises 88 residues: Large ribosomal subunit protein eL34 (88 aa).

Belongs to the eukaryotic ribosomal protein eL34 family.

The sequence is that of Large ribosomal subunit protein eL34 from Saccharolobus solfataricus (strain ATCC 35092 / DSM 1617 / JCM 11322 / P2) (Sulfolobus solfataricus).